Reading from the N-terminus, the 227-residue chain is Isopentenyl-diphosphate Delta-isomerase 1 (227 aa).

A substrate-binding site is contributed by K36. Residues H40 and H51 each coordinate Mg(2+). Residues 49–199 (LLHRAFSVFL…EVKLTPWFKI (151 aa)) enclose the Nudix hydrolase domain. The substrate site is built by R70 and K74. C86 is an active-site residue. S87 contacts substrate. The Mg(2+) site is built by E146 and E148. The active site involves E148. At K176 the chain carries N6-acetyllysine. The short motif at 225–227 (HRM) is the Microbody targeting signal element.

It belongs to the IPP isomerase type 1 family. In terms of assembly, monomer. Mg(2+) is required as a cofactor.

Its subcellular location is the peroxisome. It carries out the reaction isopentenyl diphosphate = dimethylallyl diphosphate. The protein operates within isoprenoid biosynthesis; dimethylallyl diphosphate biosynthesis; dimethylallyl diphosphate from isopentenyl diphosphate: step 1/1. In terms of biological role, catalyzes the 1,3-allylic rearrangement of the homoallylic substrate isopentenyl (IPP) to its highly electrophilic allylic isomer, dimethylallyl diphosphate (DMAPP). This chain is Isopentenyl-diphosphate Delta-isomerase 1 (IDI1), found in Mesocricetus auratus (Golden hamster).